Here is a 115-residue protein sequence, read N- to C-terminus: Protein SPIRAL1-like 2 (115 aa).

The disordered stretch occupies residues 29–48 (AKAKPAAAAEKETTPAPVKK).

This sequence belongs to the SPIRAL1 family.

In terms of biological role, acts in maintaining the cortical microtubules organization essential for anisotropic cell growth. This chain is Protein SPIRAL1-like 2, found in Oryza sativa subsp. japonica (Rice).